Consider the following 159-residue polypeptide: Serine-protein kinase RsbW (159 aa).

The protein belongs to the anti-sigma-factor family.

The catalysed reaction is L-seryl-[protein] + ATP = O-phospho-L-seryl-[protein] + ADP + H(+). It carries out the reaction L-threonyl-[protein] + ATP = O-phospho-L-threonyl-[protein] + ADP + H(+). Negative regulator of sigma-B activity. Phosphorylates and inactivates its specific antagonist protein, RsbV. Upon phosphorylation of RsbV, RsbW is released and binds to sigma-B, thereby blocking its ability to form an RNA polymerase holoenzyme (E-sigma-B). The sequence is that of Serine-protein kinase RsbW from Staphylococcus aureus.